Reading from the N-terminus, the 327-residue chain is GMP reductase (327 aa).

Cys-175 functions as the Thioimidate intermediate in the catalytic mechanism. NADP(+) is bound at residue Ile-204–Val-227.

Belongs to the IMPDH/GMPR family. GuaC type 2 subfamily.

It catalyses the reaction IMP + NH4(+) + NADP(+) = GMP + NADPH + 2 H(+). Functionally, catalyzes the irreversible NADPH-dependent deamination of GMP to IMP. It functions in the conversion of nucleobase, nucleoside and nucleotide derivatives of G to A nucleotides, and in maintaining the intracellular balance of A and G nucleotides. This is GMP reductase from Clostridium acetobutylicum (strain ATCC 824 / DSM 792 / JCM 1419 / IAM 19013 / LMG 5710 / NBRC 13948 / NRRL B-527 / VKM B-1787 / 2291 / W).